The following is a 135-amino-acid chain: Protein NrdI (135 aa).

This sequence belongs to the NrdI family.

In terms of biological role, probably involved in ribonucleotide reductase function. This chain is Protein NrdI, found in Rhizobium johnstonii (strain DSM 114642 / LMG 32736 / 3841) (Rhizobium leguminosarum bv. viciae).